Reading from the N-terminus, the 1593-residue chain is THO complex subunit 2 (1593 aa).

Positions 1–163 are anchor domain; interaction with THOC5 and THOC7; the sequence is MAAAAVVVPA…KLFYKQQKFN (163 aa). Residues 164 to 534 are bow domain; interaction with THOC1 dock domain and THOC3; sequence LLREENEGYA…GQWKNETYNS (371 aa). Positions 322-341 are disordered; the sequence is KMDEREKEKEKEEEKVEKPP. Residues 535–686 form an MIF4G domain; interaction with THOC3 and DDX39B region; the sequence is HPLLVKVKAQ…LILKEVVQKM (152 aa). The interval 687-1174 is stern domain; that stretch reads AGIEITEEMT…LAMGYSGQLK (488 aa). Residues 896–965 are a coiled coil; it reads HTSYEREVNK…LKLEKDNWLL (70 aa). Positions 923 to 928 match the Nuclear localization signal motif; the sequence is KKKKEK. The segment at 1175-1593 is charged domain; it reads SRKSYMIPEN…KHHKSSDKHR (419 aa). The tract at residues 1184 to 1593 is disordered; sequence NEFHHKDPPP…KHHKSSDKHR (410 aa). A compositionally biased stretch (basic and acidic residues) spans 1218-1234; that stretch reads KSDESSTEETDKSRERS. Serine 1222 is modified (phosphoserine). Low complexity predominate over residues 1251–1263; sequence GNSSNGNSGSNSN. Composition is skewed to basic and acidic residues over residues 1265 to 1285, 1294 to 1343, and 1353 to 1383; these read AVKE…KEKT, VLGK…EKFK, and STQE…KGGE. At threonine 1385 the chain carries Phosphothreonine. A phosphoserine mark is found at serine 1390, serine 1393, and serine 1417. The segment covering 1416–1425 has biased composition (polar residues); it reads PSPSHSSTVK. Threonine 1443 is subject to Phosphothreonine. The span at 1449–1504 shows a compositional bias: basic and acidic residues; that stretch reads KSKEREMDKKDLDKSRERSREREKKDEKDRKERKRDHSNNDREVPPDLTKRRKEEN. Phosphoserine is present on residues serine 1450, serine 1486, and serine 1516. Residues 1524–1582 are compositionally biased toward basic and acidic residues; it reads NEKDKEKNKSKSSGKEKGSDSFKSEKMDKISSGGKKESRHDKEKIEKKEKRDSSGGKEE. Residues 1583-1593 show a composition bias toward basic residues; that stretch reads KKHHKSSDKHR.

It belongs to the THOC2 family. Component of the THO subcomplex, which is composed of THOC1, THOC2, THOC3, THOC5, THOC6 and THOC7. The THO subcomplex interacts with DDX39B to form the THO-DDX39B complex which multimerizes into a 28-subunit tetrameric assembly. Component of the transcription/export (TREX) complex at least composed of ALYREF/THOC4, DDX39B, SARNP/CIP29, CHTOP and the THO subcomplex; in the complex interacts with THOC1, THOC3, THOC5, THOC7 and DDX39B. TREX seems to have a dynamic structure involving ATP-dependent remodeling. Interacts with POLDIP3 and ZC3H11A. In terms of tissue distribution, expressed in the hippocampus and the cerebral cortex.

Its subcellular location is the nucleus. It localises to the nucleus speckle. It is found in the cytoplasm. Component of the THO subcomplex of the TREX complex which is thought to couple mRNA transcription, processing and nuclear export, and which specifically associates with spliced mRNA and not with unspliced pre-mRNA. Required for efficient export of polyadenylated RNA and spliced mRNA. The THOC1-THOC2-THOC3 core complex alone is sufficient to bind export factor NXF1-NXT1 and promote ATPase activity of DDX39B; in the complex THOC2 is the only component that directly interacts with DDX39B. TREX is recruited to spliced mRNAs by a transcription-independent mechanism, binds to mRNA upstream of the exon-junction complex (EJC) and is recruited in a splicing- and cap-dependent manner to a region near the 5' end of the mRNA where it functions in mRNA export to the cytoplasm via the TAP/NXF1 pathway. Required for NXF1 localization to the nuclear rim. THOC2 (and probably the THO complex) is involved in releasing mRNA from nuclear speckle domains. Its function is as follows. (Microbial infection) The TREX complex is essential for the export of Kaposi's sarcoma-associated herpesvirus (KSHV) intronless mRNAs and infectious virus production. The chain is THO complex subunit 2 (THOC2) from Homo sapiens (Human).